A 185-amino-acid chain; its full sequence is uncharacterized protein (185 aa).

Residues 1 to 29 (MKLFSRTSLVALGTAAAITLSGVTAPAFA) form the signal peptide. The disordered stretch occupies residues 41–66 (KTAEDNTPEAPGASTPLKLEQPGTIT).

In terms of processing, glycosylated; by Pmt.

The protein localises to the secreted. This is an uncharacterized protein from Corynebacterium glutamicum (strain ATCC 13032 / DSM 20300 / JCM 1318 / BCRC 11384 / CCUG 27702 / LMG 3730 / NBRC 12168 / NCIMB 10025 / NRRL B-2784 / 534).